The following is a 202-amino-acid chain: MDAPFAKTPSNLLIAGVDEAGRGPLAGPVITAAVILNPEIIIEGLADSKKLSLKKREELYEKIITNCKAFAIARADVEEIDRLNIFRATLLAMQRAINQLSIQPDKVLIDGHCCPDLPYETQAIVQGDQNVPAISAASILAKVTRDREMLKYDAQYPDYGFAIHKGYGTKAHLAAIHRFGITPVHRKSFEPVRQLKLFIPEE.

Residues 12–201 (LLIAGVDEAG…VRQLKLFIPE (190 aa)) form the RNase H type-2 domain. A divalent metal cation-binding residues include aspartate 18, glutamate 19, and aspartate 110.

Belongs to the RNase HII family. The cofactor is Mn(2+). Mg(2+) serves as cofactor.

It localises to the cytoplasm. It carries out the reaction Endonucleolytic cleavage to 5'-phosphomonoester.. Endonuclease that specifically degrades the RNA of RNA-DNA hybrids. This chain is Ribonuclease HII, found in Coxiella burnetii (strain CbuK_Q154) (Coxiella burnetii (strain Q154)).